The sequence spans 362 residues: Probable secreted beta-glucosidase UTH1 (362 aa).

Residues 1-17 form the signal peptide; that stretch reads MKLSALLALSASTAVLA.

It belongs to the SUN family.

The protein localises to the mitochondrion outer membrane. The protein resides in the secreted. Its subcellular location is the cell wall. Its function is as follows. Involved in aging, oxidative stress response, and in the regulation of mitochondrial biogenesis. Inactivation of UTH1 increases life span, leads to higher resistance to heat stress and to hydrogen peroxide, and increases sensitivity to the superoxide radical-generating drug paraquat and to copper. Also required for the selective autophagic degradation of mitochondria (mitophagy) in response to nitrogen starvation. Involved in the remodeling of the cell wall during the various phases of yeast culture development and under various environmental conditions and plays a role in septation. Involved in cell sensitivity to boric acid. The polypeptide is Probable secreted beta-glucosidase UTH1 (UTH1) (Saccharomyces cerevisiae (strain RM11-1a) (Baker's yeast)).